A 239-amino-acid polypeptide reads, in one-letter code: Purine nucleoside phosphorylase DeoD-type (239 aa).

His5 provides a ligand contact to a purine D-ribonucleoside. Residues Gly21 and Arg25 each coordinate phosphate. Lys27 bears the N6-acetyllysine mark. Phosphate contacts are provided by residues Arg44 and 88 to 91 (RVGS). Residues 180-182 (EME) and 204-205 (SD) contribute to the a purine D-ribonucleoside site. Residue Asp205 is the Proton donor of the active site.

Belongs to the PNP/UDP phosphorylase family. Homohexamer; trimer of homodimers.

The enzyme catalyses a purine D-ribonucleoside + phosphate = a purine nucleobase + alpha-D-ribose 1-phosphate. The catalysed reaction is a purine 2'-deoxy-D-ribonucleoside + phosphate = a purine nucleobase + 2-deoxy-alpha-D-ribose 1-phosphate. Catalyzes the reversible phosphorolytic breakdown of the N-glycosidic bond in the beta-(deoxy)ribonucleoside molecules, with the formation of the corresponding free purine bases and pentose-1-phosphate. This chain is Purine nucleoside phosphorylase DeoD-type, found in Shigella dysenteriae serotype 1 (strain Sd197).